The chain runs to 1290 residues: MSGPLEGADGGGDPRPGESFCPGGVPSPGPPQHRPCPGPSLADDTDANSNGSSGNESNGHESRGASQRSSHSSSSGNGKDSALLETTESSKSTNSQSPSPPSSSIAYSLLSASSEQDNPSTSGCSSEQSARARTQKELMTALRELKLRLPPERRGKGRSGTLATLQYALACVKQVQANQEYYQQWSLEEGEPCSMDMSTYTLEELEHITSEYTLQNQDTFSVAVSFLTGRIVYISEQAAVLLRCKRDVFRGTRFSELLAPQDVGVFYGSTAPSRLPTWGTGASAGSGLRDFTQEKSVFCRIRGGPDRDPGPRYQPFRLTPYVTKIRVSDGAPAQPCCLLIAERIHSGYEAPRIPPDKRIFTTRHTPSCLFQDVDERAAPLLGYLPQDLLGAPVLLFLHPEDRPLMLAIHKKILQLAGQPFDHSPIRFCARNGEYVTMDTSWAGFVHPWSRKVAFVLGRHKVRTAPLNEDVFTPPAPSPAPSLDTDIQELSEQIHRLLLQPVHSPSPTGLCGVGAVTSPGPLHSPGSSSDSNGGDAEGPGPPAPVTFQQICKDVHLVKHQGQQLFIESRARPQSRPRLPATGTFKAKALPCQSPDPELEAGSAPVQAPLALVPEEAERKEASSCSYQQINCLDSILRYLESCNLPSTTKRKCASSSSYTTSSASDDDRQRTGPVSVGTKKDPPSAALSGEGATPRKEPVVGGTLSPLALANKAESVVSVTSQCSFSSTIVHVGDKKPPESDIIMMEDLPGLAPGPAPSPAPSPTVAPDPAPDAYRPVGLTKAVLSLHTQKEEQAFLSRFRDLGRLRGLDSSSTAPSALGERGCHHGPAPPSRRHHCRSKAKRSRHHQNPRAEAPCYVSHPSPVPPSTPWPTPPATTPFPAVVQPYPLPVFSPRGGPQPLPPAPTSVPPAAFPAPLVTPMVALVLPNYLFPTPSSYPYGALQTPAEGPPTPASHSPSPSLPALAPSPPHRPDSPLFNSRCSSPLQLNLLQLEELPRAEGAAVAGGPGSSAGPPPPSAEAAEPEARLAEVTESSNQDALSGSSDLLELLLQEDSRSGTGSAASGSLGSGLGSGSGSGSHEGGSTSASITRSSQSSHTSKYFGSIDSSEAEAGAARGGAEPGDQVIKYVLQDPIWLLMANADQRVMMTYQVPSRDMTSVLKQDRERLRAMQKQQPRFSEDQRRELGAVHSWVRKGQLPRALDVMACVDCGSSTQDPGHPDDPLFSELDGLGLEPMEEGGGEQGSSGGGSGEGEGCEEAQGGAKASSSQDLAMEEEEEGRSSSSPALPTAGNCTS.

The segment at 1–134 (MSGPLEGADG…SSEQSARART (134 aa)) is disordered. An interaction with BTRC region spans residues 1-151 (MSGPLEGADG…LRELKLRLPP (151 aa)). Pro residues predominate over residues 25–38 (VPSPGPPQHRPCPG). Low complexity-rich tracts occupy residues 48-57 (NSNGSSGNES) and 64-115 (GASQ…ASSE). Residues 116-132 (QDNPSTSGCSSEQSARA) are compositionally biased toward polar residues. Thr121 bears the Phosphothreonine; by CSNK1E mark. Residues Ser122 and Ser126 each carry the phosphoserine; by CSNK1E modification. Residues 138–147 (LMTALRELKL) carry the Nuclear export signal 1 motif. PAS domains follow at residues 208–275 (ITSE…PSRL) and 348–414 (YEAP…KILQ). A PAC domain is found at 422 to 465 (HSPIRFCARNGEYVTMDTSWAGFVHPWSRKVAFVLGRHKVRTAP). The Nuclear export signal 2 motif lies at 489–498 (LSEQIHRLLL). Disordered regions lie at residues 508 to 544 (GLCG…PAPV) and 646 to 698 (TTKR…KEPV). Low complexity-rich tracts occupy residues 517 to 533 (SPGP…SNGG) and 652 to 662 (ASSSSYTTSSA). The tract at residues 596-815 (ELEAGSAPVQ…GLDSSSTAPS (220 aa)) is required for phosphorylation by CSNK1E. A phosphoserine mark is found at Ser661, Ser663, and Ser704. Disordered regions lie at residues 749-772 (GLAP…APDA), 805-874 (RGLD…PPAT), and 938-977 (ALQT…FNSR). A compositionally biased stretch (pro residues) spans 751-769 (APGPAPSPAPSPTVAPDPA). A Phosphoserine modification is found at Ser815. The Nuclear localization signal motif lies at 827–843 (APPSRRHHCRSKAKRSR). Basic residues predominate over residues 830–847 (SRRHHCRSKAKRSRHHQN). Residues 860-874 (SPVPPSTPWPTPPAT) show a composition bias toward pro residues. The segment covering 950-961 (ASHSPSPSLPAL) has biased composition (low complexity). A phosphoserine mark is found at Ser979 and Ser980. Positions 982-989 (LQLNLLQL) match the Nuclear export signal 3 motif. Residues 996–1037 (EGAAVAGGPGSSAGPPPPSAEAAEPEARLAEVTESSNQDALS) are disordered. Positions 1043–1047 (LELLL) match the LXXLL motif. Residues 1051–1062 (SRSGTGSAASGS) show a composition bias toward low complexity. Disordered stretches follow at residues 1051-1098 (SRSG…SKYF) and 1207-1290 (SSTQ…NCTS). Gly residues predominate over residues 1063–1077 (LGSGLGSGSGSGSHE). Over residues 1078 to 1095 (GGSTSASITRSSQSSHTS) the composition is skewed to low complexity. The segment at 1149-1290 (SRDMTSVLKQ…ALPTAGNCTS (142 aa)) is CRY binding domain. The span at 1236–1248 (GEQGSSGGGSGEG) shows a compositional bias: gly residues.

As to quaternary structure, homodimer. Component of the circadian core oscillator, which includes the CRY proteins, CLOCK or NPAS2, BMAL1 or BMAL2, CSNK1D and/or CSNK1E, TIMELESS, and the PER proteins. Interacts directly with TIMELESS, PER2, PER3, CRY1 and CRY2. Interacts with BMAL1 and CLOCK. Interacts with GPRASP1. Interacts (phosphorylated) with BTRC and FBXW11; the interactions trigger proteasomal degradation. Interacts with NONO, WDR5 and SFPQ. Interacts with USP2. Interacts with HNF4A. In terms of processing, phosphorylated on serine residues by CSNK1D, CSNK1E and probably also by CSNK1G2. Phosphorylation by CSNK1D or CSNK1E promotes nuclear location of PER proteins as well as ubiquitination and subsequent degradation. May be dephosphorylated by PP1. Post-translationally, ubiquitinated; requires phosphorylation by CSNK1E and interaction with BTRC and FBXW11. Deubiquitinated by USP2. Widely expressed. Expressed in hair follicles (at protein level). Found in heart, brain, placenta, lung, liver, skeletal muscle, pancreas, kidney, spleen, thymus, prostate, testis, ovary and small intestine. Highest level in skeletal muscle.

Its subcellular location is the nucleus. The protein localises to the cytoplasm. Functionally, transcriptional repressor which forms a core component of the circadian clock. The circadian clock, an internal time-keeping system, regulates various physiological processes through the generation of approximately 24 hour circadian rhythms in gene expression, which are translated into rhythms in metabolism and behavior. It is derived from the Latin roots 'circa' (about) and 'diem' (day) and acts as an important regulator of a wide array of physiological functions including metabolism, sleep, body temperature, blood pressure, endocrine, immune, cardiovascular, and renal function. Consists of two major components: the central clock, residing in the suprachiasmatic nucleus (SCN) of the brain, and the peripheral clocks that are present in nearly every tissue and organ system. Both the central and peripheral clocks can be reset by environmental cues, also known as Zeitgebers (German for 'timegivers'). The predominant Zeitgeber for the central clock is light, which is sensed by retina and signals directly to the SCN. The central clock entrains the peripheral clocks through neuronal and hormonal signals, body temperature and feeding-related cues, aligning all clocks with the external light/dark cycle. Circadian rhythms allow an organism to achieve temporal homeostasis with its environment at the molecular level by regulating gene expression to create a peak of protein expression once every 24 hours to control when a particular physiological process is most active with respect to the solar day. Transcription and translation of core clock components (CLOCK, NPAS2, BMAL1, BMAL2, PER1, PER2, PER3, CRY1 and CRY2) plays a critical role in rhythm generation, whereas delays imposed by post-translational modifications (PTMs) are important for determining the period (tau) of the rhythms (tau refers to the period of a rhythm and is the length, in time, of one complete cycle). A diurnal rhythm is synchronized with the day/night cycle, while the ultradian and infradian rhythms have a period shorter and longer than 24 hours, respectively. Disruptions in the circadian rhythms contribute to the pathology of cardiovascular diseases, cancer, metabolic syndromes and aging. A transcription/translation feedback loop (TTFL) forms the core of the molecular circadian clock mechanism. Transcription factors, CLOCK or NPAS2 and BMAL1 or BMAL2, form the positive limb of the feedback loop, act in the form of a heterodimer and activate the transcription of core clock genes and clock-controlled genes (involved in key metabolic processes), harboring E-box elements (5'-CACGTG-3') within their promoters. The core clock genes: PER1/2/3 and CRY1/2 which are transcriptional repressors form the negative limb of the feedback loop and interact with the CLOCK|NPAS2-BMAL1|BMAL2 heterodimer inhibiting its activity and thereby negatively regulating their own expression. This heterodimer also activates nuclear receptors NR1D1/2 and RORA/B/G, which form a second feedback loop and which activate and repress BMAL1 transcription, respectively. Regulates circadian target genes expression at post-transcriptional levels, but may not be required for the repression at transcriptional level. Controls PER2 protein decay. Represses CRY2 preventing its repression on CLOCK/BMAL1 target genes such as FXYD5 and SCNN1A in kidney and PPARA in liver. Besides its involvement in the maintenance of the circadian clock, has an important function in the regulation of several processes. Participates in the repression of glucocorticoid receptor NR3C1/GR-induced transcriptional activity by reducing the association of NR3C1/GR to glucocorticoid response elements (GREs) by BMAL1:CLOCK. Plays a role in the modulation of the neuroinflammatory state via the regulation of inflammatory mediators release, such as CCL2 and IL6. In spinal astrocytes, negatively regulates the MAPK14/p38 and MAPK8/JNK MAPK cascades as well as the subsequent activation of NFkappaB. Coordinately regulates the expression of multiple genes that are involved in the regulation of renal sodium reabsorption. Can act as gene expression activator in a gene and tissue specific manner, in kidney enhances WNK1 and SLC12A3 expression in collaboration with CLOCK. Modulates hair follicle cycling. Represses the CLOCK-BMAL1 induced transcription of BHLHE40/DEC1. The protein is Period circadian protein homolog 1 (PER1) of Homo sapiens (Human).